The sequence spans 226 residues: Prolactin (226 aa).

The N-terminal stretch at 1–29 (MNSQGSDRKAVTLLLLVMSNLLFCQNAHP) is a signal peptide. A disulfide bridge connects residues Cys33 and Cys38. Residues Ser53 and Ser117 each carry the phosphoserine modification. Disulfide bonds link Cys85-Cys201 and Cys218-Cys226.

The protein belongs to the somatotropin/prolactin family. As to quaternary structure, interacts with PRLR.

Its subcellular location is the secreted. Prolactin acts primarily on the mammary gland by promoting lactation. In Mesocricetus auratus (Golden hamster), this protein is Prolactin (PRL).